Reading from the N-terminus, the 222-residue chain is UPF0688 protein C1orf174 homolog (222 aa).

Disordered regions lie at residues 23–57 (STSL…RTSK) and 98–158 (EDGA…EPVP). Over residues 33 to 48 (ASSTSAKTTCLASSSH) the composition is skewed to polar residues. Over residues 121–131 (VSEEPSVKAEE) the composition is skewed to basic and acidic residues. Ser172 carries the post-translational modification Phosphoserine.

Belongs to the UPF0688 family.

It localises to the nucleus. The polypeptide is UPF0688 protein C1orf174 homolog (Rattus norvegicus (Rat)).